The chain runs to 207 residues: LexA repressor (207 aa).

Residues 28–48 (RAEIASRLGFKSANAAEEHLK) constitute a DNA-binding region (H-T-H motif). Catalysis depends on for autocatalytic cleavage activity residues serine 124 and lysine 161.

This sequence belongs to the peptidase S24 family. In terms of assembly, homodimer.

It catalyses the reaction Hydrolysis of Ala-|-Gly bond in repressor LexA.. Functionally, represses a number of genes involved in the response to DNA damage (SOS response), including recA and lexA. In the presence of single-stranded DNA, RecA interacts with LexA causing an autocatalytic cleavage which disrupts the DNA-binding part of LexA, leading to derepression of the SOS regulon and eventually DNA repair. The sequence is that of LexA repressor from Shewanella amazonensis (strain ATCC BAA-1098 / SB2B).